Here is a 361-residue protein sequence, read N- to C-terminus: 3-galactosyl-N-acetylglucosaminide 4-alpha-L-fucosyltransferase FUT3 (361 aa).

Topologically, residues 1–15 (MDPLGAAKPQWPWRR) are cytoplasmic. Residues 16–34 (CLAALLFQLLVAVCFFSYL) traverse the membrane as a helical; Signal-anchor for type II membrane protein segment. The Lumenal portion of the chain corresponds to 35 to 361 (RVSRDDATGS…TVRSIAAWFT (327 aa)). The segment at 39 to 58 (DDATGSPRAPSGSSRQDTTP) is disordered. Asparagine 154 and asparagine 185 each carry an N-linked (GlcNAc...) asparagine glycan.

This sequence belongs to the glycosyltransferase 10 family. Glycosylated. Highly expressed in stomach, colon, small intestine, lung and kidney and to a lesser extent in salivary gland, bladder, uterus and liver.

Its subcellular location is the golgi apparatus. The protein localises to the golgi stack membrane. It carries out the reaction a beta-D-galactosyl-(1-&gt;3)-N-acetyl-beta-D-glucosaminyl derivative + GDP-beta-L-fucose = a beta-D-galactosyl-(1-&gt;3)-[alpha-L-fucosyl-(1-&gt;4)]-N-acetyl-beta-D-glucosaminyl derivative + GDP + H(+). It catalyses the reaction an N-acetyl-alpha-neuraminyl-(2-&gt;3)-beta-D-galactosyl-(1-&gt;4)-N-acetyl-beta-D-glucosaminyl derivative + GDP-beta-L-fucose = an alpha-Neu5Ac-(2-&gt;3)-beta-D-Gal-(1-&gt;4)-[alpha-L-Fuc-(1-&gt;3)]-beta-D-GlcNAc derivative + GDP + H(+). The enzyme catalyses a beta-D-galactosyl-(1-&gt;4)-N-acetyl-beta-D-glucosaminyl derivative + GDP-beta-L-fucose = a beta-D-galactosyl-(1-&gt;4)-[alpha-L-fucosyl-(1-&gt;3)]-N-acetyl-beta-D-glucosaminyl derivative + GDP + H(+). The catalysed reaction is an alpha-Neu5Ac-(2-&gt;3)-beta-D-Gal-(1-&gt;4)-beta-D-GlcNAc-(1-&gt;3)-beta-D-Gal-(1-&gt;4)-[alpha-L-Fuc-(1-&gt;3)]-beta-D-GlcNAc derivative + GDP-beta-L-fucose = an alpha-Neu5Ac-(2-&gt;3)-beta-D-Gal-(1-&gt;4)-[alpha-L-Fuc-(1-&gt;3)]-beta-D-GlcNAc-(1-&gt;3)-beta-D-Gal-(1-&gt;4)-[alpha-L-Fuc-(1-&gt;3)]-beta-D-GlcNAc derivative + GDP + H(+). It carries out the reaction Lc4Cer + GDP-beta-L-fucose = a lactoside III(4)-a-Fuc-Lc4Cer + GDP + H(+). It catalyses the reaction a beta-D-Gal-(1-&gt;3)-beta-D-GlcNAc-(1-&gt;3)-beta-D-Gal-(1-&gt;4)-beta-D-Glc-(1&lt;-&gt;1')-Cer(d18:1(4E)) + GDP-beta-L-fucose = a III(4)-a-Fuc-Lc4Cer(d18:1(4E)) + GDP + H(+). The enzyme catalyses N-acetyl-alpha-neuraminosyl-(2-&gt;3)-beta-D-galactosyl-(1-&gt;3)-[N-acetyl-alpha-neuraminosyl-(2-&gt;6)]-N-acetyl-beta-D-glucosaminyl-(1-&gt;3)-beta-D-galactosyl-(1-&gt;4)-beta-D-glucosyl-(1&lt;-&gt;1')-N-acyl-sphing-4-enine + GDP-beta-L-fucose = N-acetyl-alpha-neuraminosyl-(2-&gt;3)-beta-D-galactosyl-(1-&gt;3)-alpha-L-fucosyl-(1-&gt;4)-[N-acetyl-alpha-neuraminosyl-(2-&gt;6)-N-acetyl-beta-D-glucosaminyl-(1-&gt;3)]-beta-D-galactosyl-(1-&gt;4)-beta-D-glucosyl-(1&lt;-&gt;1')-N-acyl-sphing-4-enine + GDP + H(+). The catalysed reaction is N-acetyl-alpha-neuraminosyl-(2-&gt;3)-beta-D-galactosyl-(1-&gt;3)-N-acetyl-beta-D-glucosaminyl-(1-&gt;3)-beta-D-galactosyl-(1-&gt;4)-beta-D-glucosyl-(1&lt;-&gt;1')-N-acyl-sphing-4-enine + GDP-beta-L-fucose = N-acetyl-alpha-neuraminosyl-(2-&gt;3)-beta-D-galactosyl-(1-&gt;3)-alpha-L-fucosyl-(1-&gt;4)-[N-acetyl-beta-D-glucosaminyl-(1-&gt;3)]-beta-D-galactosyl-(1-&gt;4)-beta-D-glucosyl-(1&lt;-&gt;1')-N-acyl-sphing-4-enine + GDP + H(+). It carries out the reaction beta-D-galactosyl-(1-&gt;3)-N-acetyl-D-glucosamine + GDP-beta-L-fucose = beta-D-galactosyl-(1-&gt;3)-[alpha-L-fucosyl-(1-&gt;4)]-N-acetyl-D-glucosamine + GDP + H(+). It catalyses the reaction alpha-L-Fuc-(1-&gt;2)-beta-D-Gal-(1-&gt;3)-D-GlcNAc + GDP-beta-L-fucose = alpha-L-Fuc-(1-&gt;2)-beta-D-Gal-(1-&gt;3)-[alpha-L-Fuc-(1-&gt;4)]-D-GlcNAc + GDP + H(+). The enzyme catalyses alpha-L-Fuc-(1-&gt;2)-beta-D-Gal-(1-&gt;4)-D-GlcNAc + GDP-beta-L-fucose = alpha-L-Fuc-(1-&gt;2)-beta-D-Gal-(1-&gt;4)-[alpha-L-Fuc-(1-&gt;3)]-D-GlcNAc + GDP + H(+). The catalysed reaction is beta-D-galactosyl-(1-&gt;4)-N-acetyl-D-glucosamine + GDP-beta-L-fucose = beta-D-galactosyl-(1-&gt;4)-[alpha-L-fucosyl-(1-&gt;3)]-N-acetyl-D-glucosamine + GDP + H(+). It carries out the reaction lactose + GDP-beta-L-fucose = beta-D-galactosyl-(1-&gt;4)-[alpha-L-fucosyl-(1-&gt;3)]-D-glucose + GDP + H(+). It catalyses the reaction an alpha-Neu5Ac-(2-&gt;3)-beta-D-Gal-(1-&gt;3)-D-GlcNAc derivative + GDP-beta-L-fucose = an alpha-Neu5Ac-(2-&gt;3)-beta-D-Gal-(1-&gt;3)-[alpha-L-Fuc-(1-&gt;4)]-beta-D-GlcNAc derivative + GDP + H(+). The protein operates within protein modification; protein glycosylation. Its function is as follows. Catalyzes the transfer of L-fucose, from a guanosine diphosphate-beta-L-fucose, to both the subterminal N-acetyl glucosamine (GlcNAc) of type 1 chain (beta-D-Gal-(1-&gt;3)-beta-D-GlcNAc) glycolipids and oligosaccharides via an alpha(1,4) linkage, and the subterminal glucose (Glc) or GlcNAc of type 2 chain (beta-D-Gal-(1-&gt;4)-beta-D-GlcNAc) oligosaccharides via an alpha(1,3) linkage, independently of the presence of terminal alpha-L-fucosyl-(1,2) moieties on the terminal galactose of these acceptors. Through its catalytic activity, participates in the synthesis of antigens of the Lewis blood group system, i.e. Lewis a (Le(a)), lewis b (Le(b)), Lewis x/SSEA-1 (Le(x)) and lewis y (Le(y)) antigens. Also catalyzes the transfer of L-fucose to subterminal GlcNAc of sialyl- and disialyl-lactotetraosylceramide to produce sialyl Lewis a (sLe(a)) and disialyl Lewis a via an alpha(1,4) linkage and therefore may regulate cell surface sLe(a) expression and consequently regulates adhesive properties to E-selectin, cell proliferation and migration. Catalyzes the transfer of an L-fucose to 3'-sialyl-N-acetyllactosamine by an alpha(1,3) linkage, which allows the formation of sialyl-Lewis x structure and therefore may regulate the sialyl-Lewis x surface antigen expression and consequently adhesive properties to E-selectin. Prefers type 1 chain over type 2 acceptors. Type 1 tetrasaccharide is a better acceptor than type 1 disaccharide suggesting that a beta anomeric configuration of GlcNAc in the substrate is preferred. Lewis-positive (Le(+)) individuals have an active enzyme while Lewis-negative (Le(-)) individuals have an inactive enzyme. The polypeptide is 3-galactosyl-N-acetylglucosaminide 4-alpha-L-fucosyltransferase FUT3 (Homo sapiens (Human)).